Here is a 288-residue protein sequence, read N- to C-terminus: MKSRLKSYRRKKLGLATVIVFCSLCFLFGFYGSTLLSQNVPRVKPRLRMLDMVENGEEEASSMPHGVTGEESIGSIPFQVLSWRPRAIYFPNFATAEQCQAIIERAKVNLKPSALALRKGETAENTKGTRTSSGTFISASEESTGALDFVERKIARATMIPRSHGESFNILRYELGQKYDSHYDVFNPTEYGPQSSQRIASFLLYLSDVEEGGETMFPFENGSNMGIGYDYKQCIGLKVKPRKGDGLLFYSVFPNGTIDQTSLHGSCPVTKGEKWVATKWIRDQDQEE.

At 1-12 (MKSRLKSYRRKK) the chain is on the cytoplasmic side. A helical; Signal-anchor for type II membrane protein membrane pass occupies residues 13–33 (LGLATVIVFCSLCFLFGFYGS). Residues 34–288 (TLLSQNVPRV…KWIRDQDQEE (255 aa)) are Lumenal-facing. One can recognise a Fe2OG dioxygenase domain in the interval 164–283 (HGESFNILRY…KWVATKWIRD (120 aa)). Fe cation-binding residues include H182 and D184. Residues N221 and N255 are each glycosylated (N-linked (GlcNAc...) asparagine). H264 lines the Fe cation pocket. K274 is a binding site for 2-oxoglutarate.

This sequence belongs to the P4HA family. Fe(2+) is required as a cofactor. L-ascorbate serves as cofactor.

It is found in the endoplasmic reticulum membrane. It localises to the golgi apparatus. It catalyses the reaction L-prolyl-[collagen] + 2-oxoglutarate + O2 = trans-4-hydroxy-L-prolyl-[collagen] + succinate + CO2. Functionally, catalyzes the post-translational formation of 4-hydroxyproline in -Xaa-Pro-Gly- sequences in proline-rich peptide sequences of plant glycoproteins and other proteins. Hydroxyprolines are important constituent of many plant cell wall glycoproteins such as extensins, hydroxyproline-rich glycoproteins, lectins and arabinogalactan proteins. This Arabidopsis thaliana (Mouse-ear cress) protein is Probable prolyl 4-hydroxylase 9.